A 351-amino-acid polypeptide reads, in one-letter code: Phenoloxidase-activating factor 3 (351 aa).

A signal peptide spans Met-1 to Thr-19. Asn-16 is a glycosylation site (N-linked (GlcNAc...) asparagine). Residues Ser-22–Cys-73 enclose the Clip domain. 8 disulfide bridges follow: Cys-23/Cys-72, Cys-33/Cys-64, Cys-39/Cys-73, Cys-89/Cys-224, Cys-127/Cys-143, Cys-167/Cys-176, Cys-268/Cys-285, and Cys-295/Cys-326. One can recognise a Peptidase S1 domain in the interval Val-97–Arg-350. The Charge relay system role is filled by His-142. Residues Glu-158, Asp-160, Ala-163, and Asp-166 each contribute to the Ca(2+) site. Asp-204 (charge relay system) is an active-site residue. The active-site Charge relay system is the Ser-299.

Belongs to the peptidase S1 family. CLIP subfamily. As to quaternary structure, in the active form, heterodimer of a light chain and a heavy chain; disulfide-linked. Proteolytically cleaved.

It is found in the secreted. Cleavage of PPAF2 is Ca(2+)-independent. Inhibited by heparin. Its function is as follows. Serine endopeptidase which, by cleaving prophenoloxidase activating factor PPAF2, is required for the activation of the prophenoloxidase cascade probably following the recognition of pathogen-derived products. The chain is Phenoloxidase-activating factor 3 from Holotrichia diomphalia (Korean black chafer).